Reading from the N-terminus, the 100-residue chain is Aspartyl/glutamyl-tRNA(Asn/Gln) amidotransferase subunit C (100 aa).

The protein belongs to the GatC family. In terms of assembly, heterotrimer of A, B and C subunits.

It catalyses the reaction L-glutamyl-tRNA(Gln) + L-glutamine + ATP + H2O = L-glutaminyl-tRNA(Gln) + L-glutamate + ADP + phosphate + H(+). It carries out the reaction L-aspartyl-tRNA(Asn) + L-glutamine + ATP + H2O = L-asparaginyl-tRNA(Asn) + L-glutamate + ADP + phosphate + 2 H(+). In terms of biological role, allows the formation of correctly charged Asn-tRNA(Asn) or Gln-tRNA(Gln) through the transamidation of misacylated Asp-tRNA(Asn) or Glu-tRNA(Gln) in organisms which lack either or both of asparaginyl-tRNA or glutaminyl-tRNA synthetases. The reaction takes place in the presence of glutamine and ATP through an activated phospho-Asp-tRNA(Asn) or phospho-Glu-tRNA(Gln). The chain is Aspartyl/glutamyl-tRNA(Asn/Gln) amidotransferase subunit C from Rickettsia bellii (strain RML369-C).